Consider the following 68-residue polypeptide: Large ribosomal subunit protein bL33c (68 aa).

Belongs to the bacterial ribosomal protein bL33 family.

The protein resides in the plastid. Its subcellular location is the chloroplast. This chain is Large ribosomal subunit protein bL33c, found in Nymphaea alba (White water-lily).